The following is a 63-amino-acid chain: Hirudin (63 aa).

The interaction with thrombin active site stretch occupies residues Val1–Tyr3. 3 disulfide bridges follow: Cys6–Cys14, Cys16–Cys28, and Cys22–Cys39. The segment at Cys39–Leu63 is disordered. An O-linked (GalNAc...) threonine glycan is attached at Thr45. The interval Asp55–Leu63 is interaction with fibrinogen-binding exosite of thrombin. At Tyr62 the chain carries Sulfotyrosine.

It belongs to the protease inhibitor I14 (hirudin) family.

The protein localises to the secreted. Functionally, hirudin is a potent thrombin-specific protease inhibitor. It forms a stable non-covalent complex with alpha-thrombin, thereby abolishing its ability to cleave fibrinogen. The sequence is that of Hirudin from Poecilobdella viridis (Indian freshwater leech).